A 371-amino-acid chain; its full sequence is Aspartate-semialdehyde dehydrogenase (371 aa).

Residues R9–V12, T37–S38, and Q73 contribute to the NADP(+) site. R102 is a binding site for phosphate. C135 functions as the Acyl-thioester intermediate in the catalytic mechanism. Q162 provides a ligand contact to substrate. NADP(+) contacts are provided by residues S165–G166 and P193. Residue E241 coordinates substrate. Position 244 (K244) interacts with phosphate. R268 is a substrate binding site. H275 functions as the Proton acceptor in the catalytic mechanism. Q351 contributes to the NADP(+) binding site.

The protein belongs to the aspartate-semialdehyde dehydrogenase family. Homodimer.

The enzyme catalyses L-aspartate 4-semialdehyde + phosphate + NADP(+) = 4-phospho-L-aspartate + NADPH + H(+). It functions in the pathway amino-acid biosynthesis; L-lysine biosynthesis via DAP pathway; (S)-tetrahydrodipicolinate from L-aspartate: step 2/4. It participates in amino-acid biosynthesis; L-methionine biosynthesis via de novo pathway; L-homoserine from L-aspartate: step 2/3. The protein operates within amino-acid biosynthesis; L-threonine biosynthesis; L-threonine from L-aspartate: step 2/5. In terms of biological role, catalyzes the NADPH-dependent formation of L-aspartate-semialdehyde (L-ASA) by the reductive dephosphorylation of L-aspartyl-4-phosphate. This Neisseria meningitidis serogroup A / serotype 4A (strain DSM 15465 / Z2491) protein is Aspartate-semialdehyde dehydrogenase.